The primary structure comprises 287 residues: Ketoacyl reductase HetN (287 aa).

Residue 11–35 coordinates NAD(+); it reads LTGASRGLGVYIARALAKEQATVVC. Ser-142 contacts substrate. Tyr-155 serves as the catalytic Proton acceptor.

The protein belongs to the short-chain dehydrogenases/reductases (SDR) family.

In terms of biological role, may be involved in repressing heterocyst differentiation and may be essential for preventing all vegetative cells from differentiating. This is Ketoacyl reductase HetN (hetN) from Nostoc sp. (strain PCC 7120 / SAG 25.82 / UTEX 2576).